The chain runs to 243 residues: MPSTPESDPTQPGDRPARPALRPLTPVEGRVLGVLVEKQHTVPDTYPLSLNALASGCNQKTARAPVMNVSEAEILEAIDGLKSLSLVFEGSSSRVPRFEHNMQRALGIPSQSVALLALLLLRGPQTAAELRLNTARLHSFADISSVEAFLDELASQTPPRVVRLPRAPGARENRWMHLLSGEAGAAVAAEESARNTDGDAAPSAELEQLRTEQQALAEKVARLQGLVEHMAAQLGISADEFLG.

Over residues 1 to 10 (MPSTPESDPT) the composition is skewed to polar residues. Positions 1-23 (MPSTPESDPTQPGDRPARPALRP) are disordered.

The protein belongs to the UPF0502 family.

The sequence is that of UPF0502 protein RALTA_B0914 from Cupriavidus taiwanensis (strain DSM 17343 / BCRC 17206 / CCUG 44338 / CIP 107171 / LMG 19424 / R1) (Ralstonia taiwanensis (strain LMG 19424)).